The chain runs to 39 residues: Cytochrome b559 subunit beta (39 aa).

A helical membrane pass occupies residues 14–30 (WLAVHGLAVPTVFFLGS). His-18 serves as a coordination point for heme.

Belongs to the PsbE/PsbF family. As to quaternary structure, heterodimer of an alpha subunit and a beta subunit. PSII is composed of 1 copy each of membrane proteins PsbA, PsbB, PsbC, PsbD, PsbE, PsbF, PsbH, PsbI, PsbJ, PsbK, PsbL, PsbM, PsbT, PsbX, PsbY, PsbZ, Psb30/Ycf12, at least 3 peripheral proteins of the oxygen-evolving complex and a large number of cofactors. It forms dimeric complexes. Heme b is required as a cofactor.

It localises to the plastid. The protein resides in the chloroplast thylakoid membrane. Functionally, this b-type cytochrome is tightly associated with the reaction center of photosystem II (PSII). PSII is a light-driven water:plastoquinone oxidoreductase that uses light energy to abstract electrons from H(2)O, generating O(2) and a proton gradient subsequently used for ATP formation. It consists of a core antenna complex that captures photons, and an electron transfer chain that converts photonic excitation into a charge separation. The protein is Cytochrome b559 subunit beta of Pinus koraiensis (Korean pine).